The sequence spans 359 residues: Medium-wave-sensitive opsin 1 (359 aa).

Over M1–V47 the chain is Extracellular. A required for 11-cis-retinal regeneration region spans residues D12–P38. N29 carries N-linked (GlcNAc...) asparagine glycosylation. The helical transmembrane segment at Y48–A72 threads the bilayer. Topologically, residues T73–N84 are cytoplasmic. Residues W85–I110 traverse the membrane as a helical segment. Residues Y111 to E124 lie on the Extracellular side of the membrane. Residues C121 and C198 are joined by a disulfide bond. The chain crosses the membrane as a helical span at residues G125 to W144. At E145–L163 the chain is on the cytoplasmic side. The helical transmembrane segment at A164–S187 threads the bilayer. The Extracellular segment spans residues R188 to S213. A helical membrane pass occupies residues Y214–I241. Residues R242–R263 are Cytoplasmic-facing. Residues M264–T287 form a helical membrane-spanning segment. Topologically, residues A288 to H295 are extracellular. Residues P296–M320 traverse the membrane as a helical segment. K307 bears the N6-(retinylidene)lysine mark. The Cytoplasmic portion of the chain corresponds to N321–A359.

The protein belongs to the G-protein coupled receptor 1 family. Opsin subfamily. Monomer. Homodimer. Homotetramer. Post-translationally, O-glycosylated. Phosphorylated on some or all of the serine and threonine residues present in the C-terminal region. In terms of tissue distribution, expressed in cone photoreceptor cells.

It is found in the membrane. Its function is as follows. Visual pigments are the light-absorbing molecules that mediate vision. They consist of an apoprotein, opsin, covalently linked to cis-retinal. May increase spectral sensitivity in dim light. The polypeptide is Medium-wave-sensitive opsin 1 (Opn1mw) (Rattus norvegicus (Rat)).